The following is a 461-amino-acid chain: Cysteine--tRNA ligase (461 aa).

Cysteine 29 is a Zn(2+) binding site. The short motif at 31–41 (MTIYDLCHVGH) is the 'HIGH' region element. Positions 213, 238, and 242 each coordinate Zn(2+). The 'KMSKS' region motif lies at 274-278 (KMSKS). Lysine 277 contacts ATP.

This sequence belongs to the class-I aminoacyl-tRNA synthetase family. As to quaternary structure, monomer. The cofactor is Zn(2+).

Its subcellular location is the cytoplasm. It catalyses the reaction tRNA(Cys) + L-cysteine + ATP = L-cysteinyl-tRNA(Cys) + AMP + diphosphate. The sequence is that of Cysteine--tRNA ligase from Methylibium petroleiphilum (strain ATCC BAA-1232 / LMG 22953 / PM1).